Reading from the N-terminus, the 619-residue chain is Calnexin (619 aa).

Residues 1-21 (MVNRKWMYIFIQFLLVSSIRS) form the signal peptide. Aspartate 109 contributes to the Ca(2+) binding site. A disulfide bridge links cysteine 152 with cysteine 186. Residues tyrosine 156, lysine 158, tyrosine 177, and aspartate 184 each coordinate an alpha-D-glucoside. An N-linked (GlcNAc...) asparagine glycan is attached at asparagine 203. The interval 268 to 401 (IFDETDLKPV…RLIDNPNYFE (134 aa)) is p domain (Extended arm). Repeat copies occupy residues 270–282 (DETDLKPVDWDER), 287–299 (DESAVKPDDWDEN), 306–318 (DEAATKPYDWNEE), 325–337 (DPEAKKPQDWDED), and 340–350 (GSWEAPLIDNP). 2 4 X approximate repeats regions span residues 270–337 (DETD…WDED) and 340–397 (GSWE…IDNP). A disulfide bond links cysteine 352 and cysteine 358. Repeat copies occupy residues 359-369 (GTWKAPTIKNP), 373-383 (GKWIRPKISNP), and 387-397 (GKWTARLIDNP). Glutamate 417 provides a ligand contact to an alpha-D-glucoside. Residue aspartate 428 coordinates Ca(2+). A helical transmembrane segment spans residues 481 to 501 (LWAVYILCVLLPLVAIGVFCF). Residues 538 to 619 (GDEEDDVNQP…AKRRTARRGD (82 aa)) form a disordered region. The segment covering 547 to 557 (PGPSGSQSNPE) has biased composition (polar residues). Positions 566–577 (EQQSANSSQSSA) are enriched in low complexity. The N-linked (GlcNAc...) asparagine glycan is linked to asparagine 571. Residues 585 to 601 (HVVPENEPVKPTEEFAK) show a composition bias toward basic and acidic residues. Basic residues predominate over residues 610 to 619 (AKRRTARRGD).

This sequence belongs to the calreticulin family. Post-translationally, glycosylation is important for its biological activity. Expressed ubiquitously in every blastomere of the embryo up to the gastrulation stage. Expression becomes gradually restricted to the head and tail regions at the comma stage during embryogenesis. During postembryonic development, expressed prominently in the H-shaped excretory cell, in the neurons of head (including ASK and ADL) and tail (including PHA and PHB), in the dorsal and ventral nerve cords, and in the spermatheca. Expressed in the spicules of the male tail (at protein level).

Its subcellular location is the endoplasmic reticulum membrane. The protein resides in the cytoplasm. It is found in the perinuclear region. The protein localises to the cytoplasmic vesicle. Calcium-binding protein that interacts with newly synthesized monoglucosylated glycoproteins in the endoplasmic reticulum. It may act in assisting protein assembly and/or in the retention within the ER of unassembled protein subunits. It seems to play a major role in the quality control apparatus of the ER by the retention of incorrectly folded proteins. Required for embryogenesis and larval development under heat and ER stress conditions. May be important for germ cell development. Involved in neuronal necrotic cell death. The sequence is that of Calnexin (cnx-1) from Caenorhabditis elegans.